A 305-amino-acid polypeptide reads, in one-letter code: Syntaxin-123 (305 aa).

Residue methionine 1 is modified to N-acetylmethionine. Topologically, residues 1-278 (MNDLISSSFK…KVLQRNNRKW (278 aa)) are cytoplasmic. A coiled-coil region spans residues 46–66 (VKEDMKAVDEIHKRLQDANEE). Positions 206 to 268 (LSEIQERHDT…MRGTDQLHGA (63 aa)) constitute a t-SNARE coiled-coil homology domain. Residues 279–299 (ACIATILAIVVVIVILFPILF) form a helical; Anchor for type IV membrane protein membrane-spanning segment. Over 300–305 (NTLLRP) the chain is Vesicular.

The protein belongs to the syntaxin family. Part of the t-SNARE complex. As to expression, expressed in tips of root hairs.

It localises to the membrane. Vesicle trafficking protein that functions in the secretory pathway. Acts in coordination with SYP132 to mediate tip-focused membrane trafficking for root hair tip growth. Functions in root hair elongation by forming SNARE complexes with VAMP721,VAMP722 or VAMP724. In Arabidopsis thaliana (Mouse-ear cress), this protein is Syntaxin-123.